Consider the following 466-residue polypeptide: UDP-N-acetylmuramate--L-alanine ligase (466 aa).

Residue 119–125 (GTHGKTT) coordinates ATP.

Belongs to the MurCDEF family.

The protein resides in the cytoplasm. The enzyme catalyses UDP-N-acetyl-alpha-D-muramate + L-alanine + ATP = UDP-N-acetyl-alpha-D-muramoyl-L-alanine + ADP + phosphate + H(+). The protein operates within cell wall biogenesis; peptidoglycan biosynthesis. Its function is as follows. Cell wall formation. The polypeptide is UDP-N-acetylmuramate--L-alanine ligase (Cytophaga hutchinsonii (strain ATCC 33406 / DSM 1761 / CIP 103989 / NBRC 15051 / NCIMB 9469 / D465)).